The sequence spans 89 residues: Small ribosomal subunit protein uS15 (89 aa).

It belongs to the universal ribosomal protein uS15 family. As to quaternary structure, part of the 30S ribosomal subunit. Forms a bridge to the 50S subunit in the 70S ribosome, contacting the 23S rRNA.

Its function is as follows. One of the primary rRNA binding proteins, it binds directly to 16S rRNA where it helps nucleate assembly of the platform of the 30S subunit by binding and bridging several RNA helices of the 16S rRNA. Forms an intersubunit bridge (bridge B4) with the 23S rRNA of the 50S subunit in the ribosome. The chain is Small ribosomal subunit protein uS15 from Azoarcus sp. (strain BH72).